We begin with the raw amino-acid sequence, 132 residues long: Histone H2A.2 (132 aa).

The protein belongs to the histone H2A family. The nucleosome is a histone octamer containing two molecules each of H2A, H2B, H3 and H4 assembled in one H3-H4 heterotetramer and two H2A-H2B heterodimers. The octamer wraps approximately 147 bp of DNA.

It is found in the nucleus. Its subcellular location is the chromosome. Functionally, core component of nucleosome. Nucleosomes wrap and compact DNA into chromatin, limiting DNA accessibility to the cellular machineries which require DNA as a template. Histones thereby play a central role in transcription regulation, DNA repair, DNA replication and chromosomal stability. DNA accessibility is regulated via a complex set of post-translational modifications of histones, also called histone code, and nucleosome remodeling. The protein is Histone H2A.2 of Leishmania infantum.